We begin with the raw amino-acid sequence, 440 residues long: Beta-1,3-galactosyl-O-glycosyl-glycoprotein beta-1,6-N-acetylglucosaminyltransferase 3 (440 aa).

At 1-12 (MKMTGWKKKLCR) the chain is on the cytoplasmic side. Residues 13–30 (GHHLWALGCYSLLAVVAL) traverse the membrane as a helical; Signal-anchor for type II membrane protein segment. The Lumenal portion of the chain corresponds to 31 to 440 (RLSLRLKCDV…RHKAIYGTEL (410 aa)). Disulfide bonds link Cys73/Cys230, Cys164/Cys384, Cys185/Cys212, and Cys393/Cys425. A glycan (N-linked (GlcNAc...) asparagine) is linked at Asn108.

The protein belongs to the glycosyltransferase 14 family. Post-translationally, N-glycosylated.

It localises to the golgi apparatus membrane. It catalyses the reaction a 3-O-[beta-D-galactosyl-(1-&gt;3)-N-acetyl-alpha-D-galactosaminyl]-L-seryl-[protein] + UDP-N-acetyl-alpha-D-glucosamine = 3-O-{beta-D-galactosyl-(1-&gt;3)-[N-acetyl-beta-D-glucosaminyl-(1-&gt;6)]-N-acetyl-alpha-D-galactosaminyl}-L-seryl-[protein] + UDP + H(+). It carries out the reaction a 3-O-[beta-D-galactosyl-(1-&gt;3)-N-acetyl-alpha-D-galactosaminyl]-L-threonyl-[protein] + UDP-N-acetyl-alpha-D-glucosamine = a 3-O-{beta-D-galactosyl-(1-&gt;3)-[N-acetyl-beta-D-glucosaminyl-(1-&gt;6)]-N-acetyl-alpha-D-galactosaminyl}-L-threonyl-[protein] + UDP + H(+). The enzyme catalyses a beta-D-Gal-(1-&gt;4)-beta-D-GlcNAc-(1-&gt;3)-beta-D-Gal-(1-&gt;4)-beta-D-GlcNAc derivative + UDP-N-acetyl-alpha-D-glucosamine = a beta-D-Gal-(1-&gt;4)-beta-D-GlcNAc-(1-&gt;3)-[beta-D-GlcNAc-(1-&gt;6)]-beta-D-Gal-(1-&gt;4)-N-acetyl-beta-D-glucosaminyl derivative + UDP + H(+). The catalysed reaction is 3-O-[N-acetyl-beta-D-glucosaminyl-(1-&gt;3)-N-acetyl-alpha-D-galactosaminyl]-L-seryl-[protein] + UDP-N-acetyl-alpha-D-glucosamine = 3-O-[N-acetyl-beta-D-glucosaminyl-(1-&gt;3)-[N-acetyl-beta-D-glucosaminyl-(1-&gt;6)]-N-acetyl-alpha-D-galactosaminyl]-L-seryl-[protein] + UDP + H(+). It catalyses the reaction a 3-O-[N-acetyl-beta-D-glucosaminyl-(1-&gt;3)-N-acetyl-alpha-D-galactosaminyl]-L-threonyl-[protein] + UDP-N-acetyl-alpha-D-glucosamine = 3-O-[N-acetyl-beta-D-glucosaminyl-(1-&gt;3)-[N-acetyl-beta-D-glucosaminyl-(1-&gt;6)]-N-acetyl-alpha-D-galactosaminyl]-L-threonyl-[protein] + UDP + H(+). Its pathway is protein modification; protein glycosylation. In terms of biological role, glycosyltransferase that can synthesize all known mucin beta 6 N-acetylglucosaminides. Mediates core 2 and core 4 O-glycan branching, 2 important steps in mucin-type biosynthesis. Also has I-branching enzyme activity by converting linear into branched poly-N-acetyllactosaminoglycans, leading to introduce the blood group I antigen during embryonic development. The sequence is that of Beta-1,3-galactosyl-O-glycosyl-glycoprotein beta-1,6-N-acetylglucosaminyltransferase 3 (GCNT3) from Bos mutus grunniens (Wild yak).